The primary structure comprises 729 residues: Fatty acid oxidation complex subunit alpha (729 aa).

The tract at residues 1–189 (MLYKGDTLYL…KIGLVDGVVK (189 aa)) is enoyl-CoA hydratase/isomerase. A substrate-binding site is contributed by Asp296. Positions 311 to 729 (ETPKQAAVLG…ARPVGDLKTA (419 aa)) are 3-hydroxyacyl-CoA dehydrogenase. NAD(+) is bound by residues Met324, Asp343, 400-402 (VVE), Lys407, and Ser429. His450 acts as the For 3-hydroxyacyl-CoA dehydrogenase activity in catalysis. Asn453 contacts NAD(+). Positions 500 and 660 each coordinate substrate. A disordered region spans residues 708–729 (RHNEPYYPPVEPARPVGDLKTA).

This sequence in the N-terminal section; belongs to the enoyl-CoA hydratase/isomerase family. It in the C-terminal section; belongs to the 3-hydroxyacyl-CoA dehydrogenase family. In terms of assembly, heterotetramer of two alpha chains (FadB) and two beta chains (FadA).

It carries out the reaction a (3S)-3-hydroxyacyl-CoA + NAD(+) = a 3-oxoacyl-CoA + NADH + H(+). The enzyme catalyses a (3S)-3-hydroxyacyl-CoA = a (2E)-enoyl-CoA + H2O. It catalyses the reaction a 4-saturated-(3S)-3-hydroxyacyl-CoA = a (3E)-enoyl-CoA + H2O. The catalysed reaction is (3S)-3-hydroxybutanoyl-CoA = (3R)-3-hydroxybutanoyl-CoA. It carries out the reaction a (3Z)-enoyl-CoA = a 4-saturated (2E)-enoyl-CoA. The enzyme catalyses a (3E)-enoyl-CoA = a 4-saturated (2E)-enoyl-CoA. It functions in the pathway lipid metabolism; fatty acid beta-oxidation. Functionally, involved in the aerobic and anaerobic degradation of long-chain fatty acids via beta-oxidation cycle. Catalyzes the formation of 3-oxoacyl-CoA from enoyl-CoA via L-3-hydroxyacyl-CoA. It can also use D-3-hydroxyacyl-CoA and cis-3-enoyl-CoA as substrate. This Shigella flexneri serotype 5b (strain 8401) protein is Fatty acid oxidation complex subunit alpha.